A 314-amino-acid polypeptide reads, in one-letter code: Carbamate kinase (314 aa).

The protein belongs to the carbamate kinase family. As to quaternary structure, homodimer.

It localises to the cytoplasm. The catalysed reaction is hydrogencarbonate + NH4(+) + ATP = carbamoyl phosphate + ADP + H2O + H(+). The protein operates within metabolic intermediate metabolism; carbamoyl phosphate degradation; CO(2) and NH(3) from carbamoyl phosphate: step 1/1. The polypeptide is Carbamate kinase (arcC) (Clostridium perfringens (strain 13 / Type A)).